Consider the following 420-residue polypeptide: Phytoene synthase 1, chloroplastic (420 aa).

The N-terminal 70 residues, 1–70 (MAAITLLRSA…GEIARTSPVY (70 aa)), are a transit peptide targeting the chloroplast.

It belongs to the phytoene/squalene synthase family. As to expression, expressed in leaves. Highly expressed in developing leaves. Expressed at low levels in roots.

The protein localises to the plastid. It is found in the chloroplast membrane. Its subcellular location is the chloroplast. The protein resides in the plastoglobule. It catalyses the reaction 2 (2E,6E,10E)-geranylgeranyl diphosphate = 15-cis-phytoene + 2 diphosphate. Its function is as follows. Catalyzes the conversion of geranylgeranyl diphosphate to phytoene. Mediates the first committed step in carotenoid biosynthesis. The polypeptide is Phytoene synthase 1, chloroplastic (Oryza sativa subsp. japonica (Rice)).